The sequence spans 153 residues: Putative adenylate kinase (153 aa).

Residues glycine 12, glycine 14, lysine 15, serine 16, and threonine 17 each coordinate ATP. Residues 31 to 47 (EGNELAKEYGCLFDEEV) form an NMP region. The tract at residues 94–104 (ARGYSEEKIQE) is LID. Arginine 95 is a binding site for ATP.

The protein belongs to the adenylate kinase family. AK6 subfamily. Interacts with uS11. Not a structural component of 40S pre-ribosomes, but transiently interacts with them by binding to uS11.

The enzyme catalyses AMP + ATP = 2 ADP. It carries out the reaction ATP + H2O = ADP + phosphate + H(+). Broad-specificity nucleoside monophosphate (NMP) kinase that catalyzes the reversible transfer of the terminal phosphate group between nucleoside triphosphates and monophosphates. Also has ATPase activity. Involved in the late maturation steps of the 30S ribosomal particles, specifically 16S rRNA maturation. While NMP activity is not required for ribosome maturation, ATPase activity is. Associates transiently with small ribosomal subunit protein uS11. ATP hydrolysis breaks the interaction with uS11. May temporarily remove uS11 from the ribosome to enable a conformational change of the ribosomal RNA that is needed for the final maturation step of the small ribosomal subunit. This is Putative adenylate kinase from Thermoplasma volcanium (strain ATCC 51530 / DSM 4299 / JCM 9571 / NBRC 15438 / GSS1).